Consider the following 84-residue polypeptide: Toxin CsE9 (84 aa).

The signal sequence occupies residues 1-19 (MNSLLMITTCLILIGTVLA). The region spanning 20–83 (EDGYLFDKRK…ISRTPGKTCK (64 aa)) is the LCN-type CS-alpha/beta domain. 4 disulfides stabilise this stretch: Cys-31/Cys-82, Cys-35/Cys-58, Cys-44/Cys-63, and Cys-48/Cys-65.

It belongs to the long (4 C-C) scorpion toxin superfamily. Sodium channel inhibitor family. Beta subfamily. In terms of tissue distribution, expressed by the venom gland.

The protein localises to the secreted. Its function is as follows. Beta toxins bind voltage-independently at site-4 of sodium channels (Nav) and shift the voltage of activation toward more negative potentials thereby affecting sodium channel activation and promoting spontaneous and repetitive firing. The sequence is that of Toxin CsE9 from Centruroides sculpturatus (Arizona bark scorpion).